The following is a 416-amino-acid chain: uncharacterized protein (416 aa).

A disordered region spans residues 341–360 (EDREKGSQHTNNTHHHKRNL).

This is an uncharacterized protein from Human cytomegalovirus (strain AD169) (HHV-5).